The primary structure comprises 103 residues: Large ribosomal subunit protein bL21 (103 aa).

The protein belongs to the bacterial ribosomal protein bL21 family. In terms of assembly, part of the 50S ribosomal subunit. Contacts protein L20.

In terms of biological role, this protein binds to 23S rRNA in the presence of protein L20. The sequence is that of Large ribosomal subunit protein bL21 from Nocardia farcinica (strain IFM 10152).